A 428-amino-acid chain; its full sequence is Spliceosome RNA helicase DDX39B (428 aa).

A compositionally biased stretch (acidic residues) spans 1-19 (MAENDVDNELLDYEEDEVE). The interval 1–35 (MAENDVDNELLDYEEDEVENAAGGDGSEAPPKKDV) is disordered. Positions 45-73 (SGFRDFLLKPELLRAIVDCGFEHPSEVQH) match the Q motif motif. Residues 76–249 (IPQAILGMDV…RKFMQDPMEI (174 aa)) form the Helicase ATP-binding domain. An ATP-binding site is contributed by 89-96 (AKSGMGKT). A DECD box motif is present at residues 196 to 199 (DECD). The Helicase C-terminal domain occupies 261-422 (GLQQYYVKLK…ELPDEIDISS (162 aa)).

This sequence belongs to the DEAD box helicase family. DECD subfamily. Component of the transcription/export (TREX) complex at least composed of ALYREF/THOC4, DDX39B, SARNP/CIP29, CHTOP and the THO subcomplex.

It localises to the nucleus. The protein localises to the nucleus speckle. The enzyme catalyses ATP + H2O = ADP + phosphate + H(+). In terms of biological role, involved in nuclear export of spliced and unspliced mRNA. Component of the TREX complex which is thought to couple mRNA transcription, processing and nuclear export, and specifically associates with spliced mRNA and not with unspliced pre-mRNA. The TREX complex is recruited to spliced mRNAs by a transcription-independent mechanism, binds to mRNA upstream of the exon-junction complex (EJC) and is recruited in a splicing- and cap-dependent manner to a region near the 5' end of the mRNA where it functions in mRNA export to the cytoplasm via the TAP/NXF1 pathway. Involved in transcription elongation and genome stability. Its function is as follows. Splice factor that is required for the first ATP-dependent step in spliceosome assembly and for the interaction of U2 snRNP with the branchpoint. Has both RNA-stimulated ATP binding/hydrolysis activity and ATP-dependent RNA unwinding activity. Even with the stimulation of RNA, the ATPase activity is weak. Can only hydrolyze ATP but not other NTPs. The RNA stimulation of ATPase activity does not have a strong preference for the sequence and length of the RNA. However, ssRNA stimulates the ATPase activity much more strongly than dsRNA. Can unwind 5' or 3' overhangs or blunt end RNA duplexes in vitro. The ATPase and helicase activities are not influenced by U2AF2; the effect of ALYREF/THOC4 is reported conflictingly. The protein is Spliceosome RNA helicase DDX39B (DDX39B) of Gallus gallus (Chicken).